A 21-amino-acid polypeptide reads, in one-letter code: Japonicin-2 (21 aa).

Cysteines 14 and 21 form a disulfide.

As to expression, expressed by the skin glands.

Its subcellular location is the secreted. Its function is as follows. Antibacterial activity against the Gram-negative bacterium E.coli and the Gram-positive bacterium S.aureus. This is Japonicin-2 from Rana japonica (Japanese reddish frog).